Here is a 588-residue protein sequence, read N- to C-terminus: Sulfite reductase [NADPH] hemoprotein beta-component (588 aa).

4 residues coordinate [4Fe-4S] cluster: C442, C448, C487, and C491. Residue C491 coordinates siroheme.

It belongs to the nitrite and sulfite reductase 4Fe-4S domain family. In terms of assembly, alpha(8)-beta(8). The alpha component is a flavoprotein, the beta component is a hemoprotein. Siroheme is required as a cofactor. [4Fe-4S] cluster serves as cofactor.

It catalyses the reaction hydrogen sulfide + 3 NADP(+) + 3 H2O = sulfite + 3 NADPH + 4 H(+). Its pathway is sulfur metabolism; hydrogen sulfide biosynthesis; hydrogen sulfide from sulfite (NADPH route): step 1/1. In terms of biological role, component of the sulfite reductase complex that catalyzes the 6-electron reduction of sulfite to sulfide. This is one of several activities required for the biosynthesis of L-cysteine from sulfate. This Actinobacillus pleuropneumoniae serotype 7 (strain AP76) protein is Sulfite reductase [NADPH] hemoprotein beta-component.